A 397-amino-acid chain; its full sequence is Tryptophan synthase beta chain (397 aa).

Lys87 carries the N6-(pyridoxal phosphate)lysine modification.

Belongs to the TrpB family. In terms of assembly, tetramer of two alpha and two beta chains. It depends on pyridoxal 5'-phosphate as a cofactor.

It carries out the reaction (1S,2R)-1-C-(indol-3-yl)glycerol 3-phosphate + L-serine = D-glyceraldehyde 3-phosphate + L-tryptophan + H2O. It functions in the pathway amino-acid biosynthesis; L-tryptophan biosynthesis; L-tryptophan from chorismate: step 5/5. The beta subunit is responsible for the synthesis of L-tryptophan from indole and L-serine. In Cronobacter sakazakii (strain ATCC BAA-894) (Enterobacter sakazakii), this protein is Tryptophan synthase beta chain.